We begin with the raw amino-acid sequence, 189 residues long: Dynactin subunit 6 (189 aa).

Belongs to the dynactin subunits 5/6 family. Dynactin subunit 6 subfamily. In terms of assembly, subunit of dynactin, a multiprotein complex part of a tripartite complex with dynein and a adapter, such as BICDL1, BICD2 or HOOK3. The dynactin complex is built around ACTR1A/ACTB filament and consists of an actin-related filament composed of a shoulder domain, a pointed end and a barbed end.

Its subcellular location is the cytoplasm. It localises to the cytoskeleton. Part of the dynactin complex that activates the molecular motor dynein for ultra-processive transport along microtubules. This chain is Dynactin subunit 6 (dynF), found in Dictyostelium discoideum (Social amoeba).